Consider the following 165-residue polypeptide: Protein-export protein SecB (165 aa).

Belongs to the SecB family. In terms of assembly, homotetramer, a dimer of dimers. One homotetramer interacts with 1 SecA dimer.

It is found in the cytoplasm. In terms of biological role, one of the proteins required for the normal export of preproteins out of the cell cytoplasm. It is a molecular chaperone that binds to a subset of precursor proteins, maintaining them in a translocation-competent state. It also specifically binds to its receptor SecA. This is Protein-export protein SecB from Colwellia psychrerythraea (strain 34H / ATCC BAA-681) (Vibrio psychroerythus).